The following is a 362-amino-acid chain: Molybdenum import ATP-binding protein ModC (362 aa).

In terms of domain architecture, ABC transporter spans 2-236 (ASPIEVRLHM…LDLPLAMGGD (235 aa)). 34-41 (GPSGSGKT) is an ATP binding site. A Mop domain is found at 297-362 (QSSILNRLPV…AQIKAVAVLA (66 aa)).

It belongs to the ABC transporter superfamily. Molybdate importer (TC 3.A.1.8) family. In terms of assembly, the complex is composed of two ATP-binding proteins (ModC), two transmembrane proteins (ModB) and a solute-binding protein (ModA).

It localises to the cell inner membrane. The enzyme catalyses molybdate(out) + ATP + H2O = molybdate(in) + ADP + phosphate + H(+). In terms of biological role, part of the ABC transporter complex ModABC involved in molybdenum import. Responsible for energy coupling to the transport system. This is Molybdenum import ATP-binding protein ModC from Pseudomonas savastanoi pv. phaseolicola (strain 1448A / Race 6) (Pseudomonas syringae pv. phaseolicola (strain 1448A / Race 6)).